A 598-amino-acid chain; its full sequence is Pescadillo homolog (598 aa).

The tract at residues 296 to 317 (QAMKADSKDKDDNSNDEAPENV) is disordered. The BRCT domain maps to 345–439 (PTATLFEDFV…ELLSANLYLP (95 aa)). Disordered stretches follow at residues 452–501 (DALG…EDVE), 515–544 (GIAYSKAKDEGLHDDVASKKKRKVTDEDEE), and 564–598 (MKYSNQQKEDKIEELKKKKKQLAKKEKTLKKVEKK). The segment covering 463 to 485 (ESEDESSDSSEESDSEIENEEED) has biased composition (acidic residues). Basic and acidic residues-rich tracts occupy residues 520–532 (KAKDEGLHDDVAS), 570–579 (QKEDKIEELK), and 586–598 (AKKEKTLKKVEKK). Residues 557–598 (QRKLYKKMKYSNQQKEDKIEELKKKKKQLAKKEKTLKKVEKK) are a coiled coil.

The protein belongs to the pescadillo family. In terms of assembly, component of the NOP7 complex, composed of ERB1, NOP7 and YTM1. The complex is held together by ERB1, which interacts with NOP7 via its N-terminal domain and with YTM1 via a high-affinity interaction between the seven-bladed beta-propeller domains of the 2 proteins. The NOP7 complex associates with the 66S pre-ribosome.

It is found in the nucleus. The protein resides in the nucleolus. Its subcellular location is the nucleoplasm. In terms of biological role, component of the NOP7 complex, which is required for maturation of the 25S and 5.8S ribosomal RNAs and formation of the 60S ribosome. The protein is Pescadillo homolog of Candida glabrata (strain ATCC 2001 / BCRC 20586 / JCM 3761 / NBRC 0622 / NRRL Y-65 / CBS 138) (Yeast).